Here is a 282-residue protein sequence, read N- to C-terminus: MHFFHLYERYKHRINQKLFYTLNQLPFQKSSLLKAMKYSVFSGSKRLRSSLIYSTGDVFKVNITTLDVISTAIEFIHSYSLIHDDLPCMDNDNFRRGKISCHVKYGESTSLLAGDALQSLAFNILSNSFMPNVSNLKRIKMISELSYSIGSSGMCMGQNLDLEAEKKDVNLSELEIINLYKTSFLMRSAVRLVYFSSNNFSKSILSILDLFSISIGLAFQIQDDILDFKKDSVKTDNKKIIKKHTYPLIIGLDESRKKIKQLHKKSFLALNSLKKKISIPTY.

Residues Lys45, Arg48, and His77 each contribute to the isopentenyl diphosphate site. Positions 84 and 90 each coordinate Mg(2+). Arg95 contacts (2E)-geranyl diphosphate. Arg96 contributes to the isopentenyl diphosphate binding site. (2E)-geranyl diphosphate-binding residues include Lys181, Thr182, and Gln220.

This sequence belongs to the FPP/GGPP synthase family. It depends on Mg(2+) as a cofactor.

The protein localises to the cytoplasm. The catalysed reaction is isopentenyl diphosphate + (2E)-geranyl diphosphate = (2E,6E)-farnesyl diphosphate + diphosphate. The chain is Farnesyl diphosphate synthase (ispA) from Buchnera aphidicola subsp. Acyrthosiphon pisum (strain APS) (Acyrthosiphon pisum symbiotic bacterium).